The primary structure comprises 777 residues: DnaJ homolog subfamily C member 16 (777 aa).

A signal peptide spans 1–23 (MELGRAGPAGLLLLLLLLLAAQA). Residues 24–531 (APERDPYRVL…DSLFHSNWRE (508 aa)) are Cytoplasmic-facing. Positions 28 to 92 (DPYRVLGVGR…EKRANFDRYG (65 aa)) constitute a J domain. One can recognise a Thioredoxin domain in the interval 117–243 (FDESFFHFPF…LRQFVENLLP (127 aa)). A helical; Anchor for type IV membrane protein membrane pass occupies residues 532–552 (MMPLLSLLFSALFILFGTVIV). Topologically, residues 553–777 (QAFSDSSDTR…FYIPSWPALD (225 aa)) are extracellular. Positions 558–589 (SSDTRDSPASEKKDTTAKTEKNDTSFNKESNS) are disordered. Positions 559 to 580 (SDTRDSPASEKKDTTAKTEKND) are enriched in basic and acidic residues. Asn627 is a glycosylation site (N-linked (GlcNAc...) asparagine).

The protein localises to the endoplasmic reticulum membrane. Functionally, plays an important role in regulating the size of autophagosomes during the formation process. This Gallus gallus (Chicken) protein is DnaJ homolog subfamily C member 16 (DNAJC16).